The sequence spans 311 residues: Olfactory receptor 10D1B (311 aa).

Residues 1 to 24 (MKNLSVVTQFILLGIPHTEGVETM) are Extracellular-facing. The helical transmembrane segment at 25 to 45 (LFVLFFSFYIFTLVGNLLILL) threads the bilayer. Topologically, residues 46-54 (AIVSSSRLH) are cytoplasmic. Residues 55 to 75 (TPMYFFLCQLSVCDIFFPSVS) form a helical membrane-spanning segment. At 76-95 (SPKMLFYLSGNTPAISYAGC) the chain is on the extracellular side. C95 and C187 are disulfide-bonded. A helical transmembrane segment spans residues 96–116 (VSQLFFYHFLGGTECFLYTVM). Residues 117-137 (AYDRFVAICYPLRYSVIMSHR) are Cytoplasmic-facing. The helical transmembrane segment at 138-158 (ICAFLAMGTAVFGCIHSTFLT) threads the bilayer. The Extracellular portion of the chain corresponds to 159-192 (TLTFQLPYCGPKDVNYYFCDIPVVMKLACADTST). A helical transmembrane segment spans residues 193 to 213 (LEMVGFISVGLMPLSCFFFIL). At 214 to 237 (TSYSCIVRSILQIRSTEGRHRAFS) the chain is on the cytoplasmic side. The chain crosses the membrane as a helical span at residues 238-258 (TCSAHFTAILLFYMPVIFIYL). Residues 259–271 (RPTPSPWLDATVQ) lie on the Extracellular side of the membrane. The chain crosses the membrane as a helical span at residues 272-288 (ILNNLVTPMLNPLIYSL). Residues 289 to 311 (RNKEVKSSLWTVLHLLCFLPKHL) lie on the Cytoplasmic side of the membrane.

The protein belongs to the G-protein coupled receptor 1 family.

It is found in the cell membrane. Functionally, odorant receptor. In Mus musculus (Mouse), this protein is Olfactory receptor 10D1B.